The chain runs to 338 residues: Lipoate-protein ligase A (338 aa).

The region spanning 29 to 216 (PATQRVLFLW…AFFAHYGERV (188 aa)) is the BPL/LPL catalytic domain. Residues R71, 76–79 (GAVF), and K134 contribute to the ATP site. K134 contacts (R)-lipoate.

It belongs to the LplA family. Monomer.

It is found in the cytoplasm. The catalysed reaction is L-lysyl-[lipoyl-carrier protein] + (R)-lipoate + ATP = N(6)-[(R)-lipoyl]-L-lysyl-[lipoyl-carrier protein] + AMP + diphosphate + H(+). The protein operates within protein modification; protein lipoylation via exogenous pathway; protein N(6)-(lipoyl)lysine from lipoate: step 1/2. It participates in protein modification; protein lipoylation via exogenous pathway; protein N(6)-(lipoyl)lysine from lipoate: step 2/2. Functionally, catalyzes both the ATP-dependent activation of exogenously supplied lipoate to lipoyl-AMP and the transfer of the activated lipoyl onto the lipoyl domains of lipoate-dependent enzymes. This Salmonella typhimurium (strain LT2 / SGSC1412 / ATCC 700720) protein is Lipoate-protein ligase A.